An 898-amino-acid polypeptide reads, in one-letter code: Chitin synthase 1 (898 aa).

The disordered stretch occupies residues 1-154 (MDPRYGAQPM…PPQQGGGIQR (154 aa)). Positions 9-21 (PMPPRRSPSPGHP) are enriched in pro residues. 2 stretches are compositionally biased toward polar residues: residues 64–75 (DHLSLNAAQSVD) and 136–146 (DVPSEQYQDPP). 5 helical membrane-spanning segments follow: residues 441 to 461 (SAFGFISVLPGAFSAYRYVAL), 540 to 560 (RWLNGSFFAAIYAIVHFLDFL), 570 to 590 (FAFFIEFIFNTINMIFAWFAI), 616 to 636 (ILGVVFTWLYGVFLITCFVLS), and 651 to 671 (MCWFWAIIMIYLMFAAVFISV). Residue asparagine 685 is glycosylated (N-linked (GlcNAc...) asparagine). Helical transmembrane passes span 697 to 717 (MLIISLMSTYGIWLIASLIML), 726 to 746 (FAQYMLLTPTFTNVLNVYAFC), 825 to 845 (GVVLLWMVTNFGLAAIVLSSA), and 870 to 890 (IVLWSVAGLSAFKFIGAMWFL).

Belongs to the chitin synthase family. Class I subfamily.

The protein localises to the cell membrane. The enzyme catalyses [(1-&gt;4)-N-acetyl-beta-D-glucosaminyl](n) + UDP-N-acetyl-alpha-D-glucosamine = [(1-&gt;4)-N-acetyl-beta-D-glucosaminyl](n+1) + UDP + H(+). In terms of biological role, polymerizes chitin, a structural polymer of the cell wall and septum, by transferring the sugar moiety of UDP-GlcNAc to the non-reducing end of the growing chitin polymer. Shows additive effects in septum formation with CHS2, CHS3A, CHS4, CHS5, CHS6 and CHS7. Regulates mycelial growth and conidiation. Involved in virulence and mediates mycotoxin deoxinivalenol (DON) biosynthesis via the regulation of the expression of TRI4, TRI5 and TRI6. The protein is Chitin synthase 1 of Gibberella zeae (strain ATCC MYA-4620 / CBS 123657 / FGSC 9075 / NRRL 31084 / PH-1) (Wheat head blight fungus).